Here is a 176-residue protein sequence, read N- to C-terminus: Peptidyl-tRNA hydrolase (176 aa).

Residue Y14 participates in tRNA binding. H19 functions as the Proton acceptor in the catalytic mechanism. TRNA is bound by residues Y65, N67, and N113.

It belongs to the PTH family. In terms of assembly, monomer.

Its subcellular location is the cytoplasm. The catalysed reaction is an N-acyl-L-alpha-aminoacyl-tRNA + H2O = an N-acyl-L-amino acid + a tRNA + H(+). Hydrolyzes ribosome-free peptidyl-tRNAs (with 1 or more amino acids incorporated), which drop off the ribosome during protein synthesis, or as a result of ribosome stalling. Functionally, catalyzes the release of premature peptidyl moieties from peptidyl-tRNA molecules trapped in stalled 50S ribosomal subunits, and thus maintains levels of free tRNAs and 50S ribosomes. The polypeptide is Peptidyl-tRNA hydrolase (Phytoplasma mali (strain AT)).